Here is a 483-residue protein sequence, read N- to C-terminus: WAS/WASL-interacting protein family member 3 (483 aa).

A compositionally biased stretch (pro residues) spans 1–29; sequence MPVPPPPPPPLPPPPPPLGAPPPPPPSAP. Residues 1 to 414 are disordered; sequence MPVPPPPPPP…GGQLRNGSLH (414 aa). 3 consecutive short sequence motifs (profilin-binding motif) follow at residues 3 to 8, 11 to 16, and 20 to 25; these read VPPPPP, LPPPPP, and APPPPP. The WH2 domain occupies 45 to 62; the sequence is GRSALLADIQQGTRLRKV. Arg46 is modified (asymmetric dimethylarginine). The short motif at 58 to 61 is the RLRK element; sequence RLRK. 2 stretches are compositionally biased toward polar residues: residues 63–78 and 87–96; these read TQIN…SSKG and ANTRGASTPP. Ser149 is subject to Phosphoserine. A compositionally biased stretch (pro residues) spans 166–192; it reads PPRPNVPAPPPPTPPPPPPPLPPPLPS. Position 202 is a phosphoserine (Ser202). 2 stretches are compositionally biased toward pro residues: residues 215-239 and 256-271; these read VAPP…PLPP and HLPP…PPCG. The segment covering 277–288 has biased composition (low complexity); the sequence is AEPASPAQDAQE. Residues 289-298 are compositionally biased toward pro residues; the sequence is PPAPPPPLPP. Low complexity-rich tracts occupy residues 299–308 and 331–345; these read YASCSPRASL and PSFQ…AQAL. Phosphoserine is present on Ser383. Residues 393–404 are compositionally biased toward low complexity; that stretch reads QQATAWTPTQQP. The short motif at 424-448 is the WASP-binding motif element; the sequence is TFHSVEDFPPPDEYKPCQKIYPSKI. The disordered stretch occupies residues 461–483; the sequence is EAVGQSSDDIKGRNSQLSLKTLR. Over residues 473–483 the composition is skewed to polar residues; that stretch reads RNSQLSLKTLR.

This sequence belongs to the verprolin family. Interacts with WASL, and monomeric and filamentous actin.

It is found in the cytoplasm. Its function is as follows. May be a regulator of cytoskeletal organization. May have a role in spermatogenesis. This is WAS/WASL-interacting protein family member 3 (WIPF3) from Homo sapiens (Human).